Consider the following 81-residue polypeptide: Protein RALF-like 7 (81 aa).

The signal sequence occupies residues 1 to 29; the sequence is MSARKKNRIHVFFVSIMIIISLVSGFGEG. 2 disulfide bridges follow: C46–C54 and C66–C72.

This sequence belongs to the plant rapid alkalinization factor (RALF) family.

The protein localises to the secreted. Cell signaling peptide that may regulate plant stress, growth, and development. Mediates a rapid alkalinization of extracellular space by mediating a transient increase in the cytoplasmic Ca(2+) concentration leading to a calcium-dependent signaling events through a cell surface receptor and a concomitant activation of some intracellular mitogen-activated protein kinases. The polypeptide is Protein RALF-like 7 (RALFL7) (Arabidopsis thaliana (Mouse-ear cress)).